Reading from the N-terminus, the 370-residue chain is MSLHQFLLEPITCHAWNKDLTQIAISPNNHEVHIYKNSGNQWVKCHELKEHNGHITGIDWAPKSDRIVTCGADRNAYVWSQKDGVWKPTLVILRINRAATFVKWSPLENKFAVGSGARLISVCYFESENDWWVSKHIKKPIRSTVLSLDWHPNNVLLAAGSCDFKTRVFSAYIKEVDEKPASTPWGSKMPFGQMMAEFGGVSSGGWVHSVSFSASGNKLAWVSHDSTVSVADASKNMSVSQLKTEFLPLLSVIFVSENSLIAAGHDCCPMLFTYDEQGSLTFVSKLDIPKQSTQRNISAMERFRNMDKRATTEDRNTTLETLHQNSITQVSIYDGDKTDCRKFCTTGIDGAMTIWDFKTLESYIQGLRIM.

WD repeat units follow at residues 6–45 (FLLE…WVKC), 50–89 (EHNG…WKPT), 140–179 (PIRS…VDEK), 202–241 (SSGG…SVSQ), 244–284 (TEFL…TFVS), and 322–365 (LHQN…SYIQ).

This sequence belongs to the WD repeat ARPC1 family. In terms of assembly, component of the Arp2/3 complex.

The protein resides in the cytoplasm. Its subcellular location is the cytoskeleton. The protein localises to the nucleus. Functionally, probably functions as a component of the Arp2/3 complex which is involved in regulation of actin polymerization and together with an activating nucleation-promoting factor (NPF) mediates the formation of branched actin networks. In addition to its role in the cytoplasmic cytoskeleton, the Arp2/3 complex also promotes actin polymerization in the nucleus, thereby regulating gene transcription and repair of damaged DNA. The protein is Actin-related protein 2/3 complex subunit 1A-B (arpc1a-b) of Xenopus laevis (African clawed frog).